The primary structure comprises 432 residues: Polyadenylate-binding protein RBP47C (432 aa).

The interval 1-55 is disordered; that stretch reads MADVKIQSESESSDSHPVVDNQPPPPPPPPQQPAKEEENQPKTSPTPPPHWMRYP. The segment covering 22-32 has biased composition (pro residues); that stretch reads QPPPPPPPPQQ. RRM domains are found at residues 101 to 183 and 197 to 276; these read KTIW…WASF and LSIF…PATP. Positions 271–293 are disordered; sequence IGPATPRKTNGYQQQGGYMPNGT. A compositionally biased stretch (polar residues) spans 277–286; sequence RKTNGYQQQG. One can recognise an RRM 3 domain in the interval 304–376; the sequence is TTIFVGGLDS…QTVRLSWGRN (73 aa).

The protein belongs to the polyadenylate-binding RBP47 family. Interacts with the poly(A) tail of mRNA in nucleus. As to expression, expressed in leaves, stems, flowers, and seedlings.

The protein localises to the nucleus. It is found in the cytoplasmic granule. Heterogeneous nuclear ribonucleoprotein (hnRNP)-protein binding the poly(A) tail of mRNA and probably involved in some steps of pre-mRNA maturation. The chain is Polyadenylate-binding protein RBP47C (RBP47C) from Arabidopsis thaliana (Mouse-ear cress).